A 453-amino-acid polypeptide reads, in one-letter code: Carbamoyl phosphate synthase arginine-specific small chain (453 aa).

A mitochondrion-targeting transit peptide spans 1 to 28; that stretch reads MFARVFKAMPARASALTSVNASIQARFM. The region spanning 219-406 is the Glutamine amidotransferase type-1 domain; that stretch reads HVAVIDCGVK…IDSVKKYKAS (188 aa). Catalysis depends on C295, which acts as the Nucleophile. Catalysis depends on residues H379 and E381.

Belongs to the CarA family. Heterodimer composed of 2 chains; the small (or glutamine) chain promotes the hydrolysis of glutamine to ammonia, which is used by the large (or ammonia) chain to synthesize carbamoyl phosphate.

It is found in the mitochondrion matrix. It catalyses the reaction hydrogencarbonate + L-glutamine + 2 ATP + H2O = carbamoyl phosphate + L-glutamate + 2 ADP + phosphate + 2 H(+). The enzyme catalyses L-glutamine + H2O = L-glutamate + NH4(+). The protein operates within amino-acid biosynthesis; L-arginine biosynthesis; carbamoyl phosphate from bicarbonate: step 1/1. Functionally, small subunit of the arginine-specific carbamoyl phosphate synthase (CPSase). CPSase catalyzes the formation of carbamoyl phosphate from the ammonia moiety of glutamine, carbonate, and phosphate donated by ATP, the first step of the arginine biosynthetic pathway. The small subunit (glutamine amidotransferase) binds and cleaves glutamine to supply the large subunit with the substrate ammonia. The sequence is that of Carbamoyl phosphate synthase arginine-specific small chain (cpa1) from Neosartorya fischeri (strain ATCC 1020 / DSM 3700 / CBS 544.65 / FGSC A1164 / JCM 1740 / NRRL 181 / WB 181) (Aspergillus fischerianus).